We begin with the raw amino-acid sequence, 518 residues long: Xylose import ATP-binding protein XylG (518 aa).

2 ABC transporter domains span residues 6–245 (LQMN…VGRE) and 262–507 (FEAR…LSQP). 38 to 45 (GENGAGKS) lines the ATP pocket.

The protein belongs to the ABC transporter superfamily. Xylose importer (TC 3.A.1.2.4) family. The complex is composed of two ATP-binding proteins (XylG), two transmembrane proteins (XylH) and a solute-binding protein (XylF).

It is found in the cell inner membrane. The catalysed reaction is D-xylose(out) + ATP + H2O = D-xylose(in) + ADP + phosphate + H(+). In terms of biological role, part of the ABC transporter complex XylFGH involved in xylose import. Responsible for energy coupling to the transport system. This chain is Xylose import ATP-binding protein XylG, found in Pseudomonas fluorescens (strain Pf0-1).